The chain runs to 85 residues: UPF0297 protein Cbei_1105 (85 aa).

It belongs to the UPF0297 family.

This Clostridium beijerinckii (strain ATCC 51743 / NCIMB 8052) (Clostridium acetobutylicum) protein is UPF0297 protein Cbei_1105.